Consider the following 389-residue polypeptide: Vacuolar protein sorting-associated protein vts1 (389 aa).

The interval 149 to 335 is disordered; it reads NPQRKAKTPS…RPSQPTKASP (187 aa). Polar residues-rich tracts occupy residues 156-177, 184-219, and 227-282; these read TPSNHATEELQQSSTNSTTLPT, TNASASHETSFALPTTSPAASLSISPTKSAAVSSEP, and SLSS…PESK. Residues 294–306 show a composition bias toward low complexity; it reads TSITTTSTSIDPS. Residues 308 to 334 are compositionally biased toward polar residues; the sequence is AFSSKSTLATTRTNAPLSRPSQPTKAS.

The protein belongs to the VTA1 family. As to quaternary structure, homodimer (in cytoplasm).

It is found in the cytoplasm. It localises to the endosome membrane. Functionally, has a role in the formation of the multivesicular body (MVB). Required for the sorting of lipids to form intralumenal vesicles and for fluid-phase transport to the vacuole. Required for sorting several plasma membrane proteins into the MVB. The chain is Vacuolar protein sorting-associated protein vts1 (vts1) from Schizosaccharomyces pombe (strain 972 / ATCC 24843) (Fission yeast).